Consider the following 588-residue polypeptide: Adenine deaminase (588 aa).

The protein belongs to the metallo-dependent hydrolases superfamily. Adenine deaminase family. In terms of assembly, homodimer. Mn(2+) serves as cofactor.

The catalysed reaction is adenine + H2O + H(+) = hypoxanthine + NH4(+). The polypeptide is Adenine deaminase (Shigella sonnei (strain Ss046)).